The primary structure comprises 96 residues: Muconolactone Delta-isomerase (96 aa).

This sequence belongs to the muconolactone Delta-isomerase family. In terms of assembly, homodecamer.

It carries out the reaction (S)-muconolactone = (4,5-dihydro-5-oxofuran-2-yl)-acetate. It participates in aromatic compound metabolism; beta-ketoadipate pathway; 5-oxo-4,5-dihydro-2-furylacetate from catechol: step 3/3. The sequence is that of Muconolactone Delta-isomerase (catC) from Pseudomonas aeruginosa (strain ATCC 15692 / DSM 22644 / CIP 104116 / JCM 14847 / LMG 12228 / 1C / PRS 101 / PAO1).